The following is a 370-amino-acid chain: MNSGDSSLIDAVIYNHTLCDGWTNSTEGAIYHLGNTILFLGYMGGSGAYGALYIFSFLAPAFLCLALWGWLTMCGLDVFIWNLLLMLQCLAQVCHLIFRLMRDGLANEEFSALYTAVYLPLDVPVQVFKEITGAGENKVLSLAAEETYAVEGKTPIDQLSFLLSGRIRVSLEGQFLHYIFPHQFLDSPEWESLRPAEEGNFQVTLTAETDCRYISWRRRRLYLLLSKDRYIARLFSVMLGSDIADKLYSLNDKLFAKSGVRLDIRLPSLYHVLAPSPPGSEGGSASSPPRGSLGDPTVIKVDPAPSNPGSGTRNPQPDQGKNPVPKNPHQHWSSDTEMPSGEDSTSLILEDFADMTGSLMDYGHEREYLK.

A run of 2 helical transmembrane segments spans residues 51–71 (ALYIFSFLAPAFLCLALWGWL) and 78–98 (VFIWNLLLMLQCLAQVCHLIF). Residues 275–349 (PSPPGSEGGS…SGEDSTSLIL (75 aa)) are disordered. The span at 283-294 (GSASSPPRGSLG) shows a compositional bias: low complexity. 2 stretches are compositionally biased toward polar residues: residues 307-319 (NPGSGTRNPQPDQ) and 330-347 (QHWSSDTEMPSGEDSTSL).

It belongs to the popeye family. In terms of tissue distribution, expressed in the heart and, slightly, in skeletal muscle.

The protein localises to the membrane. Its subcellular location is the cell membrane. It localises to the sarcolemma. Important for striated muscle differentiation and cardiac morphogenesis. Is also required for cardiac conduction system development, plays a regulatory function in heart rate dynamics mediated, at least in part, through cAMP-binding. This Danio rerio (Zebrafish) protein is Popeye domain-containing 2.